Consider the following 1273-residue polypeptide: Chitin synthase 7 (1273 aa).

The interval 1–69 is disordered; that stretch reads MPAVERNAPF…LINPSSGGPG (69 aa). Residues 1–79 are Cytoplasmic-facing; that stretch reads MPAVERNAPF…FSAASRSKHR (79 aa). The helical transmembrane segment at 80 to 100 threads the bilayer; the sequence is FSWWTAFSLFVTFWAPSPLLS. At 101–117 the chain is on the extracellular side; that stretch reads SCCGLKDKQSRQAWREK. A helical membrane pass occupies residues 118–138; the sequence is VSLVFIAILLGGFIGFITMGL. Over 139-360 the chain is Cytoplasmic; it reads NAALCPSASS…FISNLVLYCS (222 aa). The helical transmembrane segment at 361–381 threads the bilayer; that stretch reads LVVILAIVLIRFFMAVWFAWF. Topologically, residues 382 to 820 are extracellular; that stretch reads MAGRMSSPPR…LCGTFCFSMQ (439 aa). N-linked (GlcNAc...) asparagine glycosylation is present at asparagine 412. A disordered region spans residues 416–451; the sequence is AAPWANKQRPPPSQPARRRRDSAQSATPSVPDSLSV. N-linked (GlcNAc...) asparagine glycosylation is found at asparagine 667 and asparagine 796. Residues 821–841 traverse the membrane as a helical segment; that stretch reads FVVFMDLLGTAVLPISIALTY. At 842–857 the chain is on the cytoplasmic side; that stretch reads TLVVTYCLNPPHSFTE. A helical membrane pass occupies residues 858 to 878; sequence AIPLMLLVAVIGMPALLILLA. Residues 879-881 are Extracellular-facing; that stretch reads TRK. A helical membrane pass occupies residues 882 to 902; that stretch reads VVYVLWMLIYLLALPVWNFVL. Over 903 to 1273 the chain is Cytoplasmic; it reads PVYSFWHFDD…RGRSYHDRFS (371 aa). 2 disordered regions span residues 966–1009 and 1126–1273; these read RELE…SVTV and NGGG…DRFS. Residues 1000–1009 are compositionally biased toward low complexity; it reads SDSFSDSVTV. Positions 1215-1232 are enriched in pro residues; that stretch reads QHPPQPSQPPQPPQPAQP. The span at 1233 to 1246 shows a compositional bias: low complexity; it reads TRPGGAPAAPPRGA.

This sequence belongs to the chitin synthase family. Class IV subfamily.

The protein resides in the cell membrane. It localises to the cytoplasmic vesicle membrane. The enzyme catalyses [(1-&gt;4)-N-acetyl-beta-D-glucosaminyl](n) + UDP-N-acetyl-alpha-D-glucosamine = [(1-&gt;4)-N-acetyl-beta-D-glucosaminyl](n+1) + UDP + H(+). Polymerizes chitin, a structural polymer of the cell wall and septum, by transferring the sugar moiety of UDP-GlcNAc to the non-reducing end of the growing chitin polymer. In Mycosarcoma maydis (Corn smut fungus), this protein is Chitin synthase 7.